Consider the following 430-residue polypeptide: Rho GTPase-activating protein 2 (430 aa).

Positions 1–36 are disordered; sequence MTGLVMMTKGGGCGGGGKGGRRKSTAEEEEEEEQNQ. Over residues 9–18 the composition is skewed to gly residues; that stretch reads KGGGCGGGGK. In terms of domain architecture, CRIB spans 80–93; it reads IGWPTNVRHITHVT. In terms of domain architecture, Rho-GAP spans 125–310; sequence VSAESMQCSY…TLAEREENAT (186 aa). The segment at 307–372 is disordered; sequence ENATGSEGYS…HLSRHSTHED (66 aa). Over residues 316 to 326 the composition is skewed to low complexity; that stretch reads SPSHSSNSQTD. Positions 347–356 are enriched in acidic residues; that stretch reads ECGEEEEVEE. Positions 357–371 are enriched in basic and acidic residues; that stretch reads VEQHQEHLSRHSTHE.

In terms of assembly, homodimerizes via its Rho-GAP domain and forms a tetrameric complex (2:2) with ARAC1/ROP3, ARAC2/ROP7, ARAC4/ROP2, ARAC5/ROP4, ARAC7/ROP9 or ARAC11/ROP1.

Its function is as follows. Acts as a GTPase activator for the Rac-type GTPase by converting it to an inactive GDP-bound state. This is Rho GTPase-activating protein 2 (ROPGAP2) from Arabidopsis thaliana (Mouse-ear cress).